The chain runs to 96 residues: Putative pterin-4-alpha-carbinolamine dehydratase (96 aa).

Belongs to the pterin-4-alpha-carbinolamine dehydratase family.

It catalyses the reaction (4aS,6R)-4a-hydroxy-L-erythro-5,6,7,8-tetrahydrobiopterin = (6R)-L-erythro-6,7-dihydrobiopterin + H2O. The polypeptide is Putative pterin-4-alpha-carbinolamine dehydratase (Novosphingobium aromaticivorans (strain ATCC 700278 / DSM 12444 / CCUG 56034 / CIP 105152 / NBRC 16084 / F199)).